The sequence spans 134 residues: DWDKVIAVNLKGTFLVTQAAGQALVSSGCSGSIINISSIVGKVGNMGQTNYAASKAGVIGLTQTAARELGRHGIRCNSVLPGFIATPMTQKVPQKVMNKITGMIPMGHLGDPEDVADVVAFLASEDSGYITGAS.

Serine 38 provides a ligand contact to substrate. Lysine 42 carries the post-translational modification N6-succinyllysine. Residue tyrosine 51 is the Proton acceptor of the active site. Residues 51-55 (YAASK) and 84-86 (IAT) contribute to the NAD(+) site. N6-succinyllysine is present on lysine 55.

The protein belongs to the short-chain dehydrogenases/reductases (SDR) family. As to quaternary structure, heterotetramer with CBR4; contains two molecules of HSD17B8 and CBR4.

Its subcellular location is the mitochondrion matrix. It catalyses the reaction 17beta-estradiol + NAD(+) = estrone + NADH + H(+). The catalysed reaction is 17beta-estradiol + NADP(+) = estrone + NADPH + H(+). It carries out the reaction testosterone + NAD(+) = androst-4-ene-3,17-dione + NADH + H(+). It functions in the pathway steroid biosynthesis; estrogen biosynthesis. Its pathway is lipid metabolism; fatty acid biosynthesis. Its function is as follows. NAD-dependent 17-beta-hydroxysteroid dehydrogenase with highest activity towards estradiol. Has very low activity towards testosterone. The heterotetramer with CBR4 has NADH-dependent 3-ketoacyl-acyl carrier protein reductase activity, and thereby plays a role in mitochondrial fatty acid biosynthesis. Within the heterotetramer, HSD17B8 binds NADH; CBR4 binds NADPD. This is Estradiol 17-beta-dehydrogenase 8 (HSD17B8) from Callithrix jacchus (White-tufted-ear marmoset).